We begin with the raw amino-acid sequence, 325 residues long: Brorin (325 aa).

An N-terminal signal peptide occupies residues 1–27; sequence MPSSTAMAVGALSSSLLVTCCLMVALC. The interval 37–121 is disordered; sequence AQAPEQPGQE…RPRGDTPQAE (85 aa). Composition is skewed to basic and acidic residues over residues 44-56 and 64-78; these read GQEK…RDGP and RPAR…DWKS. The short motif at 114–116 is the Mediates cell adhesion element; it reads RGD. VWFC domains lie at 153–212 and 216–274; these read KGCV…PQCK and NYCE…PICK.

In terms of assembly, peripherally associated with AMPAR complex. AMPAR complex consists of an inner core made of 4 pore-forming GluA/GRIA proteins (GRIA1, GRIA2, GRIA3 and GRIA4) and 4 major auxiliary subunits arranged in a twofold symmetry. One of the two pairs of distinct binding sites is occupied either by CNIH2, CNIH3 or CACNG2, CACNG3. The other harbors CACNG2, CACNG3, CACNG4, CACNG8 or GSG1L. This inner core of AMPAR complex is complemented by outer core constituents binding directly to the GluA/GRIA proteins at sites distinct from the interaction sites of the inner core constituents. Outer core constituents include at least PRRT1, PRRT2, CKAMP44/SHISA9, FRRS1L and NRN1. The proteins of the inner and outer core serve as a platform for other, more peripherally associated AMPAR constituents, including VWC2. Alone or in combination, these auxiliary subunits control the gating and pharmacology of the AMPAR complex and profoundly impact their biogenesis and protein processing.

It localises to the secreted. It is found in the extracellular space. The protein resides in the extracellular matrix. The protein localises to the basement membrane. Its subcellular location is the synapse. Its function is as follows. BMP antagonist which may play a role in neural development. Promotes cell adhesion. The chain is Brorin (VWC2) from Homo sapiens (Human).